Here is a 430-residue protein sequence, read N- to C-terminus: MPLPRAYLGTAQPPASVKEFYFVRHGATDLNEKEMHLQGEKHWGVQGAGTNIGLNGTGKRQAVLAGNVLRKLPIGSVVCSPLLRAIQTALIANIGFLCFDIDEDLKERDFGKHEGGYGPLKMFEDNYPDCEDTEMFSLRVAKALTHAKNENTLFVSHGGVLRVIAALLGVDLTKEHTNNGRVLHFRRGFSHWTVEIHQSPVILVSGSNRGVGKAIAEDLIAHGYRLSLGARKVKDLEVAFGPQDEWLHYARFDAEDHGTMAAWVTAAVEKFGRIDGLVNNAGYGEPVNLDKHVDYQRFHLQWYINCVAPLRMTELCLPHLYETGSGRIVNINSMSGQRVLNPLVGYNMTKHALGGLTKTTQHVGWDRRCAAIDICLGFVATDMSAWTDLIASKDMIQPEDIAKLVREAIERPNRAYVPRSEVMCIKEATR.

203-227 (LVSGSNRGVGKAIAEDLIAHGYRLS) lines the NAD(+) pocket. Ser333 lines the substrate pocket. Catalysis depends on Tyr346, which acts as the Proton acceptor.

The protein belongs to the short-chain dehydrogenases/reductases (SDR) family.

The protein operates within opine metabolism; mannopine biosynthesis. In terms of biological role, reduces deoxy-fructosyl-glutamine to mannopine. This is Agropine synthesis reductase (mas1) from Rhizobium rhizogenes (Agrobacterium rhizogenes).